The sequence spans 165 residues: V-type proton ATPase 16 kDa proteolipid subunit (165 aa).

Over 1 to 10 (MPSTFSGDET) the chain is Lumenal. Residues 11 to 33 (APFFGFLGAAAALVFSCMGAAYG) form a helical membrane-spanning segment. Topologically, residues 34-55 (TAKSGVGVASMGVMRPELVMKS) are cytoplasmic. A helical membrane pass occupies residues 56–76 (IVPVVMAGVLGIYGLIIAVII). Residues 77–95 (STGINPKTKSYYLFDGYAH) lie on the Lumenal side of the membrane. Residues 96–117 (LSSGLACGLAGLSAGMAIGIVG) form a helical membrane-spanning segment. The Cytoplasmic segment spans residues 118 to 129 (DAGVRANAQQPK). Residues 130-155 (LFVGMILILIFAEALALYGLIVGIIL) traverse the membrane as a helical segment. Residues 156-165 (SSRAGQSRAE) lie on the Lumenal side of the membrane.

It belongs to the V-ATPase proteolipid subunit family. In terms of assembly, V-ATPase is a heteromultimeric enzyme composed of a peripheral catalytic V1 complex (main components: subunits A, B, C, D, E, and F) attached to an integral membrane V0 proton pore complex (main component: the proteolipid protein; which is present as a hexamer that forms the proton-conducting pore).

Its subcellular location is the vacuole membrane. Its function is as follows. Proton-conducting pore forming subunit of the membrane integral V0 complex of vacuolar ATPase. V-ATPase is responsible for acidifying a variety of intracellular compartments in eukaryotic cells. The polypeptide is V-type proton ATPase 16 kDa proteolipid subunit (Nicotiana tabacum (Common tobacco)).